A 340-amino-acid polypeptide reads, in one-letter code: Delta-aminolevulinic acid dehydratase (340 aa).

Residues C134, C136, and C144 each coordinate Zn(2+). K211 (schiff-base intermediate with substrate) is an active-site residue. 5-aminolevulinate is bound by residues R221 and R233. Catalysis depends on K264, which acts as the Schiff-base intermediate with substrate. 5-aminolevulinate is bound by residues S291 and Y330.

This sequence belongs to the ALAD family. As to quaternary structure, homooctamer. Requires Zn(2+) as cofactor.

It catalyses the reaction 2 5-aminolevulinate = porphobilinogen + 2 H2O + H(+). The protein operates within porphyrin-containing compound metabolism; protoporphyrin-IX biosynthesis; coproporphyrinogen-III from 5-aminolevulinate: step 1/4. Functionally, catalyzes an early step in the biosynthesis of tetrapyrroles. Binds two molecules of 5-aminolevulinate per subunit, each at a distinct site, and catalyzes their condensation to form porphobilinogen. The sequence is that of Delta-aminolevulinic acid dehydratase (HEM2) from Eremothecium gossypii (strain ATCC 10895 / CBS 109.51 / FGSC 9923 / NRRL Y-1056) (Yeast).